We begin with the raw amino-acid sequence, 512 residues long: ATP synthase subunit alpha (512 aa).

170-177 (GDRQTGKT) serves as a coordination point for ATP.

It belongs to the ATPase alpha/beta chains family. F-type ATPases have 2 components, CF(1) - the catalytic core - and CF(0) - the membrane proton channel. CF(1) has five subunits: alpha(3), beta(3), gamma(1), delta(1), epsilon(1). CF(0) has three main subunits: a(1), b(2) and c(9-12). The alpha and beta chains form an alternating ring which encloses part of the gamma chain. CF(1) is attached to CF(0) by a central stalk formed by the gamma and epsilon chains, while a peripheral stalk is formed by the delta and b chains.

The protein localises to the cell inner membrane. It carries out the reaction ATP + H2O + 4 H(+)(in) = ADP + phosphate + 5 H(+)(out). Functionally, produces ATP from ADP in the presence of a proton gradient across the membrane. The alpha chain is a regulatory subunit. This Solibacter usitatus (strain Ellin6076) protein is ATP synthase subunit alpha.